We begin with the raw amino-acid sequence, 199 residues long: MESFVTPQRRSAAEQEPKPTANIENIVATVSLDQTLDLNLIERSILTVEYNPEQFPGLVYRLDSPKVTALIFKSGKMVVTGAKSTRDLIEAVKKIVRNLKKHGIQIYGRPKVQIQNIVASANLNVCVDLERAALTLENSMYEPEQFPGLIHRMDEPRVVLLIFSSGKMVITGAKREEEVYEAVNKIYEKLKKLRAIRPC.

A run of 2 repeats spans residues 23 to 99 and 114 to 190.

Belongs to the TBP family.

In terms of biological role, general factor that plays a role in the activation of archaeal genes transcribed by RNA polymerase. Binds specifically to the TATA box promoter element which lies close to the position of transcription initiation. This is TATA-box-binding protein (tbp) from Pyrodictium occultum.